We begin with the raw amino-acid sequence, 457 residues long: Arginine biosynthesis bifunctional protein ArgJ, mitochondrial (457 aa).

Positions 184, 213, 224, 312, 452, and 457 each coordinate substrate. The active-site Nucleophile is threonine 224.

Belongs to the ArgJ family. In terms of assembly, heterodimer of an alpha and a beta chain. The alpha and beta chains are autoproteolytically processed from a single precursor protein within the mitochondrion.

Its subcellular location is the mitochondrion matrix. It carries out the reaction N(2)-acetyl-L-ornithine + L-glutamate = N-acetyl-L-glutamate + L-ornithine. The enzyme catalyses L-glutamate + acetyl-CoA = N-acetyl-L-glutamate + CoA + H(+). It participates in amino-acid biosynthesis; L-arginine biosynthesis; L-ornithine and N-acetyl-L-glutamate from L-glutamate and N(2)-acetyl-L-ornithine (cyclic): step 1/1. It functions in the pathway amino-acid biosynthesis; L-arginine biosynthesis; N(2)-acetyl-L-ornithine from L-glutamate: step 1/4. Functionally, catalyzes two activities which are involved in the cyclic version of arginine biosynthesis: the synthesis of acetylglutamate from glutamate and acetyl-CoA, and of ornithine by transacetylation between acetylornithine and glutamate. This chain is Arginine biosynthesis bifunctional protein ArgJ, mitochondrial, found in Aspergillus terreus (strain NIH 2624 / FGSC A1156).